A 421-amino-acid polypeptide reads, in one-letter code: UDP-N-acetylglucosamine 1-carboxyvinyltransferase 2 (421 aa).

22 to 23 (KN) serves as a coordination point for phosphoenolpyruvate. Arg95 lines the UDP-N-acetyl-alpha-D-glucosamine pocket. The active-site Proton donor is Cys119. The residue at position 119 (Cys119) is a 2-(S-cysteinyl)pyruvic acid O-phosphothioketal. UDP-N-acetyl-alpha-D-glucosamine-binding positions include 124–128 (RPIEQ), Asp308, and Val330.

Belongs to the EPSP synthase family. MurA subfamily.

The protein localises to the cytoplasm. The catalysed reaction is phosphoenolpyruvate + UDP-N-acetyl-alpha-D-glucosamine = UDP-N-acetyl-3-O-(1-carboxyvinyl)-alpha-D-glucosamine + phosphate. The protein operates within cell wall biogenesis; peptidoglycan biosynthesis. In terms of biological role, cell wall formation. Adds enolpyruvyl to UDP-N-acetylglucosamine. This Staphylococcus haemolyticus (strain JCSC1435) protein is UDP-N-acetylglucosamine 1-carboxyvinyltransferase 2.